Reading from the N-terminus, the 368-residue chain is C-X-C chemokine receptor type 3 (368 aa).

Topologically, residues 1 to 53 (MVLEVSDHQVLNDAEVAALLENFSSSYDYGENESDSCCTSPPCPQDFSLNFDR) are extracellular. The N-linked (GlcNAc...) asparagine glycan is linked to Asn-22. Residues Tyr-27 and Tyr-29 each carry the sulfotyrosine modification. Residue Asn-32 is glycosylated (N-linked (GlcNAc...) asparagine). The helical transmembrane segment at 54-80 (AFLPALYSLLFLLGLLGNGAVAAVLLS) threads the bilayer. Residues 81 to 89 (RRTALSSTD) lie on the Cytoplasmic side of the membrane. The helical transmembrane segment at 90–110 (TFLLHLAVADTLLVLTLPLWA) threads the bilayer. The Extracellular segment spans residues 111–125 (VDAAVQWVFGSGLCK). Cys-124 and Cys-203 are oxidised to a cystine. A helical membrane pass occupies residues 126 to 147 (VAGALFNINFYAGALLLACISF). Over 148-169 (DRYLNIVHATQLYRRGPPARVT) the chain is Cytoplasmic. The chain crosses the membrane as a helical span at residues 170-189 (LTCLAVWGLCLLFALPDFIF). Topologically, residues 190-212 (LSAHHDERLNATHCQYNFPQVGR) are extracellular. Residues 213–233 (TALRVLQLVAGFLLPLLVMAY) traverse the membrane as a helical segment. The Cytoplasmic portion of the chain corresponds to 234-255 (CYAHILAVLLVSRGQRRLRAMR). A helical membrane pass occupies residues 256-277 (LVVVVVVAFALCWTPYHLVVLV). The Extracellular segment spans residues 278–298 (DILMDLGALARNCGRESRVDV). Residues 299-321 (AKSVTSGLGYMHCCLNPLLYAFV) traverse the membrane as a helical segment. At 322–368 (GVKFRERMWMLLLRLGCPNQRGLQRQPSSSRRDSSWSETSEASYSGL) the chain is on the cytoplasmic side. Residues 342–368 (RGLQRQPSSSRRDSSWSETSEASYSGL) form a disordered region. Positions 357–368 (WSETSEASYSGL) are enriched in low complexity.

It belongs to the G-protein coupled receptor 1 family. Homomer. Forms heteromers with ACKR4. As to quaternary structure, interacts with PF4/CXCL4. Post-translationally, sulfation on Tyr-27 and Tyr-29 is essential for CXCL10 binding and subsequent signal transduction induction. N-glycosylated. As to expression, isoform 1 and isoform 2 are mainly expressed in heart, kidney, liver and skeletal muscle. Isoform 1 is also expressed in placenta. Isoform 2 is expressed in endothelial cells. Expressed in T-cells (at protein level).

It is found in the cell membrane. Functionally, receptor for the C-X-C chemokine CXCL9, CXCL10 and CXCL11 and mediates the proliferation, survival and angiogenic activity of human mesangial cells (HMC) through a heterotrimeric G-protein signaling pathway. Binds to CCL21. Probably promotes cell chemotaxis response. Upon activation by PF4, induces activated T-lymphocytes migration mediated via downstream Ras/extracellular signal-regulated kinase (ERK) signaling. Receptor for the C-X-C chemokine CXCL4 and also mediates the inhibitory activities of CXCL9, CXCL10 and CXCL11 on the proliferation, survival and angiogenic activity of human microvascular endothelial cells (HMVEC) through a cAMP-mediated signaling pathway. Does not promote cell chemotaxis respons. Interaction with CXCL4 or CXCL10 leads to activation of the p38MAPK pathway and contributes to inhibition of angiogenesis. Overexpression in renal cancer cells down-regulates expression of the anti-apoptotic protein HMOX1 and promotes apoptosis. In terms of biological role, mediates the activity of CXCL11. This Homo sapiens (Human) protein is C-X-C chemokine receptor type 3 (CXCR3).